The following is a 95-amino-acid chain: MGLRYSKEVRERHGDKDLEGRVPMTLNLPQGLYGRFNCKSCWFANRGLIACSDHYLCLNCLTRLRSQSQFCGICGKPLPTKIRFEESPSAPPYEP.

G2 carries N-myristoyl glycine; by host lipidation. The segment at 38 to 74 adopts an RING-type; atypical zinc-finger fold; sequence CKSCWFANRGLIACSDHYLCLNCLTRLRSQSQFCGIC. The PTAP/PSAP motif signature appears at 88–91; sequence PSAP.

This sequence belongs to the arenaviridae Z protein family. As to quaternary structure, interacts with protein NP; this interaction probably directs the encapsidated genome to budding sites. Interacts (via RING domain) with polymerase L; this interaction inhibits viral transcription and replication, Z partially blocks the product exit tunnel for the releasing nascent RNA product. Interacts with the glycoprotein complex; this interaction plays a role in virion budding. Interacts with host eIF4E; this interaction results in eIF4E reduced affinity for its substrate, the 5'-m7 G cap structure. Interacts (via late-budding domain) with host TSG101; this interaction is essential for budding and release of viral particles. Interacts with host RPLP0; this interaction may serve to load ribosome-like particles inside the virion. Interacts with host PML; this interaction induces PML bodies redistribution in the cytoplasm upon viral infection. In terms of processing, myristoylation is required for the role of RING finger protein Z in assembly and budding.

The protein resides in the virion. The protein localises to the host cytoplasm. Its subcellular location is the host perinuclear region. It is found in the host cell membrane. Functionally, plays a crucial role in virion assembly and budding. Expressed late in the virus life cycle, it acts as an inhibitor of viral transcription and RNA synthesis by interacting with the viral polymerase L. Presumably recruits the NP encapsidated genome to cellular membranes at budding sites via direct interaction with NP. Plays critical roles in the final steps of viral release by interacting with host TSG101, a member of the vacuolar protein-sorting pathway and using other cellular host proteins involved in vesicle formation pathway. The budding of the virus progeny occurs after association of protein Z with the viral glycoprotein complex SSP-GP1-GP2 at the cell periphery, step that requires myristoylation of protein Z. Also selectively represses protein production by associating with host eIF4E. In cell-based minigenome assay, has an inhibitory effect on the ribonucleoprotein machinery (vRNP), which is responsible for the replication and transcription of the viral genome. In Pirital mammarenavirus (isolate Rat/Venezuela/VAV-488/1995) (PIRV), this protein is RING finger protein Z.